The sequence spans 272 residues: Putative esterase/lipase 3 (272 aa).

Residue His34 is part of the active site. The active-site Charge relay system is Ser100.

Belongs to the lipase/esterase LIP3/BchO family.

The sequence is that of Putative esterase/lipase 3 from Mycoplasma pneumoniae (strain ATCC 29342 / M129 / Subtype 1) (Mycoplasmoides pneumoniae).